The primary structure comprises 319 residues: Ribosomal large subunit pseudouridine synthase C (319 aa).

The 64-residue stretch at 20 to 83 (QRIDNFLRTQ…AEREEEAVSP (64 aa)) folds into the S4 RNA-binding domain. The active site involves Asp144.

Belongs to the pseudouridine synthase RluA family.

The catalysed reaction is uridine(955/2504/2580) in 23S rRNA = pseudouridine(955/2504/2580) in 23S rRNA. Functionally, responsible for synthesis of pseudouridine from uracil at positions 955, 2504 and 2580 in 23S ribosomal RNA. The sequence is that of Ribosomal large subunit pseudouridine synthase C (rluC) from Escherichia coli O157:H7.